Reading from the N-terminus, the 1233-residue chain is Integrator complex subunit 4 homolog (1233 aa).

HEAT repeat units follow at residues 236-273 (SLIN…NLDK) and 275-310 (SEEI…RGAS). The tract at residues 426–473 (RLQQKQQQQQQQQQQQQQQPPQQQPSQQPNQQPNQQQTNVSGTHIATP) is disordered. Residues 428–462 (QQKQQQQQQQQQQQQQQPPQQQPSQQPNQQPNQQQ) are compositionally biased toward low complexity. HEAT repeat units lie at residues 487–524 (ILES…RNDE), 525–561 (FAQK…NVVI), and 563–597 (EEQL…SNYS). A compositionally biased stretch (low complexity) spans 767-792 (NNNTNNNNNNNNNNNNNNNNNNNNNN). Disordered stretches follow at residues 767–796 (NNNT…DEND) and 993–1057 (DKKL…TTTT). Acidic residues predominate over residues 1000–1013 (EENEENEENENNEN). Positions 1014-1030 (ENEKENGKNKEKEKNEN) are enriched in basic and acidic residues. Positions 1046 to 1057 (KTTSELIKTTTT) are enriched in low complexity.

It belongs to the Integrator subunit 4 family. Component of the Integrator complex. The core complex associates with protein phosphatase 2A subunits, to form the Integrator-PP2A (INTAC) complex.

It localises to the nucleus. It is found in the cytoplasm. Component of the integrator complex, a multiprotein complex that terminates RNA polymerase II (Pol II) transcription in the promoter-proximal region of genes. The integrator complex provides a quality checkpoint during transcription elongation by driving premature transcription termination of transcripts that are unfavorably configured for transcriptional elongation: the complex terminates transcription by (1) catalyzing dephosphorylation of the C-terminal domain (CTD) of Pol II subunit polr2a, (2) degrading the exiting nascent RNA transcript via endonuclease activity and (3) promoting the release of Pol II from bound DNA. The integrator complex is also involved in terminating the synthesis of non-coding Pol II transcripts, such as enhancer RNAs (eRNAs), small nuclear RNAs (snRNAs), telomerase RNAs and long non-coding RNAs (lncRNAs). In Dictyostelium discoideum (Social amoeba), this protein is Integrator complex subunit 4 homolog (ints4).